The following is a 196-amino-acid chain: Probable signal peptidase I-1 (196 aa).

Over 1–16 (MQNSPIPSPWQFIKEN) the chain is Cytoplasmic. A helical transmembrane segment spans residues 17–35 (IPLLMVALVLALLLRFFVA). The Periplasmic portion of the chain corresponds to 36–196 (EPRYIPSDSM…FVPARTIINT (161 aa)). Active-site residues include Ser-44 and Lys-94.

Belongs to the peptidase S26 family.

It is found in the cell membrane. It carries out the reaction Cleavage of hydrophobic, N-terminal signal or leader sequences from secreted and periplasmic proteins.. In Synechocystis sp. (strain ATCC 27184 / PCC 6803 / Kazusa), this protein is Probable signal peptidase I-1 (lepB1).